The following is a 1128-amino-acid chain: Lysylphosphatidylglycerol biosynthesis bifunctional protein LysX (1128 aa).

Positions 1-47 (MDNPPPTGVAPRHLPPGSVHTGKVTASLSHRRPDSVQDAPPAPVPHR) are disordered. Positions 1 to 632 (MDNPPPTGVA…GLHADGSPPD (632 aa)) are phosphatidylglycerol lysyltransferase. Transmembrane regions (helical) follow at residues 55 to 75 (VPHIAGLVLGVFAVACLLWSL), 97 to 117 (APDTNVMWALIVGLLAGAIAS), 121 to 141 (IAWWLLVGYLTLFAVANGLRF), 147 to 167 (INALVAMIVQVGVVGLLIAAW), 184 to 204 (GVLVGGLAIGCLLGWGLVEVF), and 240 to 260 (FVNVLLGLFGAIALLAAVLTL). Positions 619–644 (DTLTGLHADGSPPDWPKPDLLDSGPR) are disordered. Positions 633–1128 (WPKPDLLDSG…TLPFPLVKPR (496 aa)) are lysine--tRNA ligase. Residues 634 to 644 (PKPDLLDSGPR) are compositionally biased toward basic and acidic residues. Positions 1040 and 1047 each coordinate Mg(2+).

In the N-terminal section; belongs to the LPG synthetase family. This sequence in the C-terminal section; belongs to the class-II aminoacyl-tRNA synthetase family. Mg(2+) serves as cofactor.

The protein localises to the cell membrane. It carries out the reaction tRNA(Lys) + L-lysine + ATP = L-lysyl-tRNA(Lys) + AMP + diphosphate. The catalysed reaction is L-lysyl-tRNA(Lys) + a 1,2-diacyl-sn-glycero-3-phospho-(1'-sn-glycerol) = a 1,2-diacyl-sn-glycero-3-phospho-1'-(3'-O-L-lysyl)-sn-glycerol + tRNA(Lys). In terms of biological role, catalyzes the production of L-lysyl-tRNA(Lys)transfer and the transfer of a lysyl group from L-lysyl-tRNA(Lys) to membrane-bound phosphatidylglycerol (PG), which produces lysylphosphatidylglycerol (LPG), one of the components of the bacterial membrane with a positive net charge. LPG synthesis contributes to the resistance to cationic antimicrobial peptides (CAMPs) and likely protects M.tuberculosis against the CAMPs produced by competiting microorganisms (bacteriocins). In fact, the modification of anionic phosphatidylglycerol with positively charged L-lysine results in repulsion of the peptides. The protein is Lysylphosphatidylglycerol biosynthesis bifunctional protein LysX (lysX) of Nocardia farcinica (strain IFM 10152).